Here is a 430-residue protein sequence, read N- to C-terminus: UDP-N-acetylmuramoylalanine--D-glutamate ligase (430 aa).

ATP is bound at residue Gly109 to Thr115.

The protein belongs to the MurCDEF family.

It localises to the cytoplasm. It catalyses the reaction UDP-N-acetyl-alpha-D-muramoyl-L-alanine + D-glutamate + ATP = UDP-N-acetyl-alpha-D-muramoyl-L-alanyl-D-glutamate + ADP + phosphate + H(+). It functions in the pathway cell wall biogenesis; peptidoglycan biosynthesis. Functionally, cell wall formation. Catalyzes the addition of glutamate to the nucleotide precursor UDP-N-acetylmuramoyl-L-alanine (UMA). The chain is UDP-N-acetylmuramoylalanine--D-glutamate ligase from Thermotoga sp. (strain RQ2).